The primary structure comprises 119 residues: Large ribosomal subunit protein bL20 (119 aa).

It belongs to the bacterial ribosomal protein bL20 family.

Functionally, binds directly to 23S ribosomal RNA and is necessary for the in vitro assembly process of the 50S ribosomal subunit. It is not involved in the protein synthesizing functions of that subunit. This is Large ribosomal subunit protein bL20 from Afipia carboxidovorans (strain ATCC 49405 / DSM 1227 / KCTC 32145 / OM5) (Oligotropha carboxidovorans).